The sequence spans 341 residues: Endolytic peptidoglycan transglycosylase RlpA (341 aa).

An N-terminal signal peptide occupies residues 1-26 (MSKRVRSSLILPAVCGLGLAAVLLSS). The N-palmitoyl cysteine moiety is linked to residue Cys-27. Residue Cys-27 is the site of S-diacylglycerol cysteine attachment. An SPOR domain is found at 260-341 (SLPADGLYLQ…LGQPTLVRPD (82 aa)).

Belongs to the RlpA family.

The protein localises to the cell membrane. Functionally, lytic transglycosylase with a strong preference for naked glycan strands that lack stem peptides. Required for efficient separation of daughter cells and maintenance of rod shape. This chain is Endolytic peptidoglycan transglycosylase RlpA, found in Pseudomonas aeruginosa (strain UCBPP-PA14).